The following is a 430-amino-acid chain: Adenylosuccinate synthetase (430 aa).

GTP contacts are provided by residues 12–18 and 40–42; these read GDEGKGK and GHT. Aspartate 13 functions as the Proton acceptor in the catalytic mechanism. 2 residues coordinate Mg(2+): aspartate 13 and glycine 40. Residues 13–16, 38–41, threonine 130, arginine 144, glutamine 224, threonine 239, and arginine 303 each bind IMP; these read DEGK and NAGH. Catalysis depends on histidine 41, which acts as the Proton donor. 299–305 contributes to the substrate binding site; it reads VNTGRKR. Residues arginine 305, 331 to 333, and 413 to 415 each bind GTP; these read KLD and STS.

The protein belongs to the adenylosuccinate synthetase family. Homodimer. Mg(2+) serves as cofactor.

It is found in the cytoplasm. It carries out the reaction IMP + L-aspartate + GTP = N(6)-(1,2-dicarboxyethyl)-AMP + GDP + phosphate + 2 H(+). The protein operates within purine metabolism; AMP biosynthesis via de novo pathway; AMP from IMP: step 1/2. Functionally, plays an important role in the de novo pathway of purine nucleotide biosynthesis. Catalyzes the first committed step in the biosynthesis of AMP from IMP. This Rhodopseudomonas palustris (strain ATCC BAA-98 / CGA009) protein is Adenylosuccinate synthetase.